A 729-amino-acid polypeptide reads, in one-letter code: Polyribonucleotide nucleotidyltransferase (729 aa).

Residues D509 and D515 each contribute to the Mg(2+) site. One can recognise a KH domain in the interval 575–634 (PRVISVKIPVDKIGEVIGPKGKMINQIQADSGAEITVEDDGTIYIGAVDGPSAESARSAI). One can recognise an S1 motif domain in the interval 646 to 718 (GERYLGTIVK…SRGKISLSPS (73 aa)).

The protein belongs to the polyribonucleotide nucleotidyltransferase family. Mg(2+) is required as a cofactor.

The protein resides in the cytoplasm. It carries out the reaction RNA(n+1) + phosphate = RNA(n) + a ribonucleoside 5'-diphosphate. Involved in mRNA degradation. Catalyzes the phosphorolysis of single-stranded polyribonucleotides processively in the 3'- to 5'-direction. In Frankia casuarinae (strain DSM 45818 / CECT 9043 / HFP020203 / CcI3), this protein is Polyribonucleotide nucleotidyltransferase.